The chain runs to 868 residues: Receptor-like protein 32 (868 aa).

A signal peptide spans 1–32; the sequence is MKDSWNSTSIIPFTFSSLIFFLFTFDFQDVFG. At 33–815 the chain is on the extracellular side; it reads VPTKHLCRLE…PPELEEEDRE (783 aa). N-linked (GlcNAc...) asparagine glycosylation is found at Asn-73, Asn-109, Asn-141, and Asn-165. LRR repeat units lie at residues 118–142, 143–166, 168–188, 189–213, 214–237, 239–261, 262–285, 287–310, 312–334, 335–360, 362–385, 389–412, 413–436, 438–459, 465–489, 490–515, 517–538, 540–560, 561–586, 588–606, 607–630, 675–699, 700–723, 724–747, and 749–772; these read LRFL…IENF, SHLT…IGNL, QLTF…FFGN, MNQL…LLNL, KHLS…MSSL, NLEY…LFTI, ASLT…NISS, STLT…ISKF, NLQD…IFTN, LKSL…LFSS, LNSI…SVAD, TQLI…LRSQ, HKMT…LWTL, KLIF…TEHG, KPSM…ICAL, RSLI…NLKS, LSFL…IFKS, RSLD…FIRL, SALE…SLKK, QVLV…HASF, HTLR…YFVN, LKIY…IGLL, KELH…MGNL, RELE…LGNL, and YLAY…QFRR. A glycan (N-linked (GlcNAc...) asparagine) is linked at Asn-233. N-linked (GlcNAc...) asparagine glycosylation is found at Asn-275 and Asn-282. Asn-342 and Asn-347 each carry an N-linked (GlcNAc...) asparagine glycan. Asn-477 and Asn-503 each carry an N-linked (GlcNAc...) asparagine glycan. An N-linked (GlcNAc...) asparagine glycan is attached at Asn-574. N-linked (GlcNAc...) asparagine glycosylation is present at Asn-613. 4 N-linked (GlcNAc...) asparagine glycosylation sites follow: Asn-706, Asn-746, Asn-754, and Asn-774. A helical transmembrane segment spans residues 816-836; the sequence is VFSWIAAAIGFGPGIAFGLTI. Residues 837-868 lie on the Cytoplasmic side of the membrane; it reads RYILVFYKPDWFMHTFGHLQPSAHEKRLRRKQ.

It belongs to the RLP family.

The protein resides in the cell membrane. The protein is Receptor-like protein 32 of Arabidopsis thaliana (Mouse-ear cress).